Here is a 732-residue protein sequence, read N- to C-terminus: X-ray repair cross-complementing protein 5 (732 aa).

The region spanning 9–231 (AVVLCMDVGF…DEIYSFSESL (223 aa)) is the VWFA domain. The leucine-zipper stretch occupies residues 138–165 (LSSRFSKSQLDIIIHSLKKCDISLQFFL). The residue at position 144 (K144) is an N6-acetyllysine. Residue K195 forms a Glycyl lysine isopeptide (Lys-Gly) (interchain with G-Cter in SUMO2) linkage. Residues 253-452 (IGSNLSIRIA…KYAPTEAQLN (200 aa)) enclose the Ku domain. Residues S255 and S258 each carry the phosphoserine modification. K265 is modified (N6-acetyllysine). S318 carries the phosphoserine modification. At K332 the chain carries N6-acetyllysine. Glycyl lysine isopeptide (Lys-Gly) (interchain with G-Cter in SUMO2) cross-links involve residues K532 and K534. T535 bears the Phosphothreonine mark. Residues K566 and K568 each participate in a glycyl lysine isopeptide (Lys-Gly) (interchain with G-Cter in SUMO2) cross-link. Phosphoserine; by PRKDC occurs at positions 577, 579, and 580. N6-acetyllysine occurs at positions 660 and 665. Glycyl lysine isopeptide (Lys-Gly) (interchain with G-Cter in SUMO2) cross-links involve residues K669 and K688. T715 is subject to Phosphothreonine; by PRKDC. The short motif at 720–728 (EEGGDVDDL) is the EEXXXDL motif element.

The protein belongs to the ku80 family. In terms of assembly, heterodimer composed of XRCC5/Ku80 and XRCC6/Ku70; heterodimerization stabilizes XRCC5 protein. Component of the core long-range non-homologous end joining (NHEJ) complex (also named DNA-PK complex) composed of PRKDC, LIG4, XRCC4, XRCC6/Ku70, XRCC5/Ku86 and NHEJ1/XLF. Additional component of the NHEJ complex includes PAXX. Following autophosphorylation, PRKDC dissociates from DNA, leading to formation of the short-range NHEJ complex, composed of LIG4, XRCC4, XRCC6/Ku70, XRCC5/Ku86 and NHEJ1/XLF. The XRCC5-XRCC6 dimer also associates with NAA15, and this complex displays DNA binding activity towards the osteocalcin FGF response element (OCFRE). In addition, XRCC5 binds to the osteoblast-specific transcription factors MSX2 and RUNX2. Interacts with ELF3. Interacts with APLF (via KBM motif). The XRCC5/XRCC6 dimer associates in a DNA-dependent manner with APEX1. Identified in a complex with DEAF1 and XRCC6. Interacts with NR4A3; the DNA-dependent protein kinase complex DNA-PK phosphorylates and activates NR4A3 and prevents NR4A3 ubiquitinylation and degradation. Interacts with RNF138. Interacts with CYREN isoform 1 (CYREN-1) and isoform 4 (CYREN-2) (via KBM motif). Interacts with WRN (via KBM motif). Interacts (via N-terminus) with HSF1 (via N-terminus); this interaction is direct and prevents XRCC5/XRCC6 heterodimeric binding and non-homologous end joining (NHEJ) repair activities induced by ionizing radiation (IR). Interacts with DHX9; this interaction occurs in a RNA-dependent manner. Part of the HDP-RNP complex composed of at least HEXIM1, PRKDC, XRCC5, XRCC6, paraspeckle proteins (SFPQ, NONO, PSPC1, RBM14, and MATR3) and NEAT1 RNA. Interacts with ERCC6. The XRCC5-XRCC6 dimer associates with ALKBH2. Interacts with TPRN; TPRN interacts with a number of DNA damage response proteins, is recruited to sites of DNA damage and may play a role in DNA damage repair. Interacts with ERCC6L2. (Microbial infection) Interacts with human T-cell leukemia virus 1/HTLV-1 protein HBZ. ADP-ribosylated by PARP3. In terms of processing, phosphorylated on serine residues. Phosphorylation by PRKDC may enhance helicase activity. Post-translationally, sumoylated. Ubiquitinated by RNF8 via 'Lys-48'-linked ubiquitination following DNA damage, leading to its degradation and removal from DNA damage sites. Ubiquitinated by RNF138, leading to remove the Ku complex from DNA breaks.

The protein resides in the nucleus. It localises to the nucleolus. Its subcellular location is the chromosome. Its function is as follows. Single-stranded DNA-dependent ATP-dependent helicase that plays a key role in DNA non-homologous end joining (NHEJ) by recruiting DNA-PK to DNA. Required for double-strand break repair and V(D)J recombination. Also has a role in chromosome translocation. The DNA helicase II complex binds preferentially to fork-like ends of double-stranded DNA in a cell cycle-dependent manner. It works in the 3'-5' direction. During NHEJ, the XRCC5-XRRC6 dimer performs the recognition step: it recognizes and binds to the broken ends of the DNA and protects them from further resection. Binding to DNA may be mediated by XRCC6. The XRCC5-XRRC6 dimer acts as a regulatory subunit of the DNA-dependent protein kinase complex DNA-PK by increasing the affinity of the catalytic subunit PRKDC to DNA by 100-fold. The XRCC5-XRRC6 dimer is probably involved in stabilizing broken DNA ends and bringing them together. The assembly of the DNA-PK complex to DNA ends is required for the NHEJ ligation step. The XRCC5-XRRC6 dimer probably also acts as a 5'-deoxyribose-5-phosphate lyase (5'-dRP lyase), by catalyzing the beta-elimination of the 5' deoxyribose-5-phosphate at an abasic site near double-strand breaks. XRCC5 probably acts as the catalytic subunit of 5'-dRP activity, and allows to 'clean' the termini of abasic sites, a class of nucleotide damage commonly associated with strand breaks, before such broken ends can be joined. The XRCC5-XRRC6 dimer together with APEX1 acts as a negative regulator of transcription. In association with NAA15, the XRCC5-XRRC6 dimer binds to the osteocalcin promoter and activates osteocalcin expression. As part of the DNA-PK complex, involved in the early steps of ribosome assembly by promoting the processing of precursor rRNA into mature 18S rRNA in the small-subunit processome. Binding to U3 small nucleolar RNA, recruits PRKDC and XRCC5/Ku86 to the small-subunit processome. Plays a role in the regulation of DNA virus-mediated innate immune response by assembling into the HDP-RNP complex, a complex that serves as a platform for IRF3 phosphorylation and subsequent innate immune response activation through the cGAS-STING pathway. The polypeptide is X-ray repair cross-complementing protein 5 (XRCC5) (Homo sapiens (Human)).